Consider the following 155-residue polypeptide: Pre-hexon-linking protein VIII (155 aa).

Residues 44–84 constitute a propeptide that is removed on maturation; it reads GVHRTKDIKPEDLVGRGIQLNSYQPPTTRLKPERVFQLAGG.

This sequence belongs to the adenoviridae hexon-linking protein family. Interacts with the peripentonal hexons as well as the hexons in the facets. Part of a complex composed of the core-capsid bridging protein, the endosome lysis protein VI and the hexon-linking protein VIII; these interactions bridge the virus core to the capsid. Cleaved by the viral protease during virion maturation. May cause the middle segment to be shed from the capsid.

The protein resides in the virion. The protein localises to the host nucleus. Functionally, structural component of the virion that acts as a cement protein on the capsid interior and which glue the peripentonal hexons and group-of-nine hexons together. The protein is Pre-hexon-linking protein VIII of Bos taurus (Bovine).